The following is a 502-amino-acid chain: Lysine--tRNA ligase (502 aa).

Mg(2+) contacts are provided by E411 and E418.

The protein belongs to the class-II aminoacyl-tRNA synthetase family. Homodimer. It depends on Mg(2+) as a cofactor.

The protein localises to the cytoplasm. It catalyses the reaction tRNA(Lys) + L-lysine + ATP = L-lysyl-tRNA(Lys) + AMP + diphosphate. In Chromohalobacter salexigens (strain ATCC BAA-138 / DSM 3043 / CIP 106854 / NCIMB 13768 / 1H11), this protein is Lysine--tRNA ligase.